Consider the following 472-residue polypeptide: Poly(A) polymerase catalytic subunit (472 aa).

Residues D194 and D196 contribute to the active site.

The protein belongs to the poxviridae poly(A) polymerase catalytic subunit family. In terms of assembly, heterodimer of a large (catalytic) subunit and a small (regulatory) subunit.

It carries out the reaction RNA(n) + ATP = RNA(n)-3'-adenine ribonucleotide + diphosphate. Its function is as follows. Polymerase that creates the 3'-poly(A) tail of mRNA's. This Fowlpox virus (strain NVSL) (FPV) protein is Poly(A) polymerase catalytic subunit (PAPL).